The following is a 115-amino-acid chain: MKKKHRIKKNDEFQTVFQKGKSNANRQFVVYQLDKAEQPYFRIGLSVSKKIGNAVVRNRIKRMIRQSITELKDEIDSGKDFVIIARKPCAEMTYEEVKKSLIHVFKRSGMKRIKK.

Belongs to the RnpA family. As to quaternary structure, consists of a catalytic RNA component (M1 or rnpB) and a protein subunit.

It catalyses the reaction Endonucleolytic cleavage of RNA, removing 5'-extranucleotides from tRNA precursor.. Its function is as follows. RNaseP catalyzes the removal of the 5'-leader sequence from pre-tRNA to produce the mature 5'-terminus. It can also cleave other RNA substrates such as 4.5S RNA. The protein component plays an auxiliary but essential role in vivo by binding to the 5'-leader sequence and broadening the substrate specificity of the ribozyme. The chain is Ribonuclease P protein component from Bacillus cereus (strain 03BB102).